An 84-amino-acid polypeptide reads, in one-letter code: Small ribosomal subunit protein uS17 (84 aa).

It belongs to the universal ribosomal protein uS17 family. As to quaternary structure, part of the 30S ribosomal subunit.

Its function is as follows. One of the primary rRNA binding proteins, it binds specifically to the 5'-end of 16S ribosomal RNA. This chain is Small ribosomal subunit protein uS17, found in Clostridium kluyveri (strain NBRC 12016).